The sequence spans 194 residues: Casparian strip membrane protein 2 (194 aa).

Topologically, residues 1–32 (MSTTIDIPESSKVVKGKGVVAAPLRPGGWKKG) are cytoplasmic. The helical transmembrane segment at 33–53 (VAIMDFILRLGAIAAALGAAA) threads the bilayer. Over 54-82 (TMGTSDQTLPFFTQFFQFEASYDSFTTFQ) the chain is Extracellular. Residues 83 to 103 (FFVITMALVGGYLVLSLPFSV) traverse the membrane as a helical segment. Over 104–115 (VAIIRPHAVGPR) the chain is Cytoplasmic. Residues 116–136 (LFLIILDTVFLTLATASAASA) form a helical membrane-spanning segment. Residues 137–168 (AAVVYLAHNGDQDTNWLAICNQFGDFCAQTSS) lie on the Extracellular side of the membrane. A helical transmembrane segment spans residues 169–189 (AVVSSFVAVVVFVLLIVMSAL). Over 190 to 194 (AMGKP) the chain is Cytoplasmic.

It belongs to the Casparian strip membrane proteins (CASP) family. Homodimer and heterodimers.

It is found in the cell membrane. In terms of biological role, regulates membrane-cell wall junctions and localized cell wall deposition. Required for establishment of the Casparian strip membrane domain (CSD) and the subsequent formation of Casparian strips, a cell wall modification of the root endodermis that determines an apoplastic barrier between the intraorganismal apoplasm and the extraorganismal apoplasm and prevents lateral diffusion. The chain is Casparian strip membrane protein 2 from Vigna unguiculata (Cowpea).